We begin with the raw amino-acid sequence, 89 residues long: Large ribosomal subunit protein bL27 (89 aa).

The protein belongs to the bacterial ribosomal protein bL27 family.

The chain is Large ribosomal subunit protein bL27 from Synechococcus sp. (strain JA-3-3Ab) (Cyanobacteria bacterium Yellowstone A-Prime).